Consider the following 225-residue polypeptide: UPF0758 protein XOO0462 (225 aa).

An MPN domain is found at 102 to 224 (ALSDPPSVGR…PVSLAERGWL (123 aa)). Residues histidine 173, histidine 175, and aspartate 186 each coordinate Zn(2+). Residues 173-186 (HNHPSGNPEPSEAD) carry the JAMM motif motif.

This sequence belongs to the UPF0758 family.

The protein is UPF0758 protein XOO0462 of Xanthomonas oryzae pv. oryzae (strain MAFF 311018).